A 2051-amino-acid polypeptide reads, in one-letter code: Autophagy-related protein 2 (2051 aa).

One can recognise a Chorein N-terminal domain in the interval 31–121 (QALDLDNLNF…QDEQTAKNKK (91 aa)). The span at 108–117 (SKQEQDEQTA) shows a compositional bias: basic and acidic residues. Disordered regions lie at residues 108-129 (SKQE…DGDE), 152-179 (RRLE…DDDG), 297-331 (SLVK…DMSI), 363-384 (DTQY…TPRA), 419-466 (RSEP…ADTE), and 501-564 (PGGW…DTST). 2 stretches are compositionally biased toward polar residues: residues 374–383 (AGSSPLSTPR) and 426–435 (PPTSFQPQTM). A compositionally biased stretch (low complexity) spans 436 to 454 (PSGAVSPAPSEPSSSASSV).

The protein belongs to the ATG2 family.

The protein resides in the preautophagosomal structure membrane. It is found in the endoplasmic reticulum membrane. The enzyme catalyses a 1,2-diacyl-sn-glycero-3-phosphocholine(in) = a 1,2-diacyl-sn-glycero-3-phosphocholine(out). The catalysed reaction is a 1,2-diacyl-sn-glycero-3-phospho-L-serine(in) = a 1,2-diacyl-sn-glycero-3-phospho-L-serine(out). It carries out the reaction a 1,2-diacyl-sn-glycero-3-phosphoethanolamine(in) = a 1,2-diacyl-sn-glycero-3-phosphoethanolamine(out). Its function is as follows. Lipid transfer protein required for autophagosome completion and peroxisome degradation. Tethers the edge of the isolation membrane (IM) to the endoplasmic reticulum (ER) and mediates direct lipid transfer from ER to IM for IM expansion. Atg-2 binds to the ER exit site (ERES), which is the membrane source for autophagosome formation, using basic residues in its N-terminal region (NR) and to the expanding edge of the IM through its C-terminal region. The latter binding is assisted by an atg-18-PtdIns3P interaction. Atg-2 then extracts phospholipids from the membrane source using its NR and transfers them to atg-9 to the IM through its predicted beta-sheet-rich structure for membrane expansion. This chain is Autophagy-related protein 2 (apg-2), found in Neurospora crassa (strain ATCC 24698 / 74-OR23-1A / CBS 708.71 / DSM 1257 / FGSC 987).